The sequence spans 306 residues: Ornithine carbamoyltransferase (306 aa).

Residues 53–56 (STRT), Gln-80, Arg-104, and 131–134 (HPCQ) each bind carbamoyl phosphate. L-ornithine contacts are provided by residues Asn-162, Asp-219, and 223–224 (SM). Residues 259–260 (CL) and Arg-287 each bind carbamoyl phosphate.

Belongs to the aspartate/ornithine carbamoyltransferase superfamily. OTCase family.

The protein resides in the cytoplasm. It catalyses the reaction carbamoyl phosphate + L-ornithine = L-citrulline + phosphate + H(+). It functions in the pathway amino-acid biosynthesis; L-arginine biosynthesis; L-arginine from L-ornithine and carbamoyl phosphate: step 1/3. Its function is as follows. Reversibly catalyzes the transfer of the carbamoyl group from carbamoyl phosphate (CP) to the N(epsilon) atom of ornithine (ORN) to produce L-citrulline. This Pseudomonas syringae pv. tomato (strain ATCC BAA-871 / DC3000) protein is Ornithine carbamoyltransferase.